We begin with the raw amino-acid sequence, 380 residues long: tRNA-specific 2-thiouridylase MnmA (380 aa).

Residues 6–13 and methionine 32 each bind ATP; that span reads ALSGGVDS. Residue cysteine 101 is the Nucleophile of the active site. Cysteine 101 and cysteine 199 form a disulfide bridge. Glycine 125 contributes to the ATP binding site. The tract at residues 148 to 150 is interaction with tRNA; it reads KDQ. The Cysteine persulfide intermediate role is filled by cysteine 199.

This sequence belongs to the MnmA/TRMU family.

Its subcellular location is the cytoplasm. The catalysed reaction is S-sulfanyl-L-cysteinyl-[protein] + uridine(34) in tRNA + AH2 + ATP = 2-thiouridine(34) in tRNA + L-cysteinyl-[protein] + A + AMP + diphosphate + H(+). Catalyzes the 2-thiolation of uridine at the wobble position (U34) of tRNA, leading to the formation of s(2)U34. The sequence is that of tRNA-specific 2-thiouridylase MnmA from Beutenbergia cavernae (strain ATCC BAA-8 / DSM 12333 / CCUG 43141 / JCM 11478 / NBRC 16432 / NCIMB 13614 / HKI 0122).